We begin with the raw amino-acid sequence, 460 residues long: uncharacterized protein (460 aa).

To yeast YGL164c.

This is an uncharacterized protein from Schizosaccharomyces pombe (strain 972 / ATCC 24843) (Fission yeast).